A 363-amino-acid chain; its full sequence is Chorismate synthase (363 aa).

NADP(+)-binding residues include R48 and R54. FMN is bound by residues 125-127, 237-238, G277, 292-296, and R318; these read RSS, NA, and KPTSS.

The protein belongs to the chorismate synthase family. As to quaternary structure, homotetramer. Requires FMNH2 as cofactor.

It catalyses the reaction 5-O-(1-carboxyvinyl)-3-phosphoshikimate = chorismate + phosphate. It functions in the pathway metabolic intermediate biosynthesis; chorismate biosynthesis; chorismate from D-erythrose 4-phosphate and phosphoenolpyruvate: step 7/7. Its function is as follows. Catalyzes the anti-1,4-elimination of the C-3 phosphate and the C-6 proR hydrogen from 5-enolpyruvylshikimate-3-phosphate (EPSP) to yield chorismate, which is the branch point compound that serves as the starting substrate for the three terminal pathways of aromatic amino acid biosynthesis. This reaction introduces a second double bond into the aromatic ring system. The sequence is that of Chorismate synthase from Pseudomonas putida (strain W619).